A 340-amino-acid polypeptide reads, in one-letter code: tRNA N6-adenosine threonylcarbamoyltransferase (340 aa).

Fe cation contacts are provided by His-111 and His-115. Substrate-binding positions include 133–137 (VVSGG), Asp-166, Gly-179, Asp-183, and Asn-274. Asp-299 contacts Fe cation.

It belongs to the KAE1 / TsaD family. It depends on Fe(2+) as a cofactor.

The protein resides in the cytoplasm. It carries out the reaction L-threonylcarbamoyladenylate + adenosine(37) in tRNA = N(6)-L-threonylcarbamoyladenosine(37) in tRNA + AMP + H(+). In terms of biological role, required for the formation of a threonylcarbamoyl group on adenosine at position 37 (t(6)A37) in tRNAs that read codons beginning with adenine. Is involved in the transfer of the threonylcarbamoyl moiety of threonylcarbamoyl-AMP (TC-AMP) to the N6 group of A37, together with TsaE and TsaB. TsaD likely plays a direct catalytic role in this reaction. This Brachyspira hyodysenteriae (strain ATCC 49526 / WA1) protein is tRNA N6-adenosine threonylcarbamoyltransferase.